The sequence spans 271 residues: Carboxy-terminal domain RNA polymerase II polypeptide A small phosphatase 2 (271 aa).

S5 bears the Phosphoserine mark. The region spanning 97–255 (EDQGRICVVI…LNLIPIFEEL (159 aa)) is the FCP1 homology domain. Residue D107 is the 4-aspartylphosphate intermediate of the active site. The Mg(2+) site is built by D107, D109, and N218. The active-site Proton donor is the D109.

In terms of assembly, monomer. Interacts with REST. Mg(2+) serves as cofactor. Expression is restricted to non-neuronal tissues. Highest expression in pancreas and lowest in liver.

It is found in the nucleus. The enzyme catalyses O-phospho-L-seryl-[protein] + H2O = L-seryl-[protein] + phosphate. The catalysed reaction is O-phospho-L-threonyl-[protein] + H2O = L-threonyl-[protein] + phosphate. Preferentially catalyzes the dephosphorylation of 'Ser-5' within the tandem 7 residue repeats in the C-terminal domain (CTD) of the largest RNA polymerase II subunit POLR2A. Negatively regulates RNA polymerase II transcription, possibly by controlling the transition from initiation/capping to processive transcript elongation. Recruited by REST to neuronal genes that contain RE-1 elements, leading to neuronal gene silencing in non-neuronal cells. May contribute to the development of sarcomas. The chain is Carboxy-terminal domain RNA polymerase II polypeptide A small phosphatase 2 (CTDSP2) from Homo sapiens (Human).